A 330-amino-acid chain; its full sequence is Ferric enterobactin transport system permease protein FepG (330 aa).

The Periplasmic segment spans residues 1 to 7 (MIYVSRR). Residues 8-28 (LLITCLLLVSACVVAGIWGLR) form a helical membrane-spanning segment. At 29 to 62 (SGAVTLETSQVFAALMGDAPRSMTMVVTEWRLPR) the chain is on the cytoplasmic side. The chain crosses the membrane as a helical span at residues 63–83 (VLMALLIGAALGVSGAIFQSL). Topologically, residues 84-92 (MRNPLGSPD) are periplasmic. A helical transmembrane segment spans residues 93–113 (VMGFNTGAWSGVLVAMVLFGQ). The Cytoplasmic segment spans residues 114–117 (DLTA). The chain crosses the membrane as a helical span at residues 118–138 (IALSAMVGGIVTSLLVWLLAW). Residues 139 to 146 (RNGIDTFR) are Periplasmic-facing. A helical transmembrane segment spans residues 147 to 167 (LIIIGIGVRAMLVAFNTWLLL). Over 168–190 (KASLETALTAGLWNAGSLNGLTW) the chain is Cytoplasmic. A helical transmembrane segment spans residues 191–211 (AKTSPSAPIIILMLIAAALLV). Residues 212-235 (RRMRLLEMGDDTACALGVSVERSR) are Periplasmic-facing. A helical transmembrane segment spans residues 236–256 (LLMMLVAVVLTAAATALAGPI). The Cytoplasmic portion of the chain corresponds to 257-275 (SFIALVAPHIARRISGTAR). Residues 276–296 (WGLTQAALCGALLLLAADLCA) traverse the membrane as a helical segment. The Periplasmic portion of the chain corresponds to 297 to 303 (QQLFMPY). A helical transmembrane segment spans residues 304–324 (QLPVGVVTVSLGGIYLIVLLI). The Cytoplasmic segment spans residues 325–330 (QESRKK).

It belongs to the binding-protein-dependent transport system permease family. FecCD subfamily. In terms of assembly, the complex is composed of two ATP-binding proteins (FepC), two transmembrane proteins (FepD and FepG) and a solute-binding protein (FepB).

It is found in the cell inner membrane. Functionally, part of the ABC transporter complex FepBDGC involved in ferric enterobactin uptake. Responsible for the translocation of the substrate across the membrane. This is Ferric enterobactin transport system permease protein FepG (fepG) from Escherichia coli (strain K12).